The chain runs to 394 residues: Na(+)/H(+) antiporter NhaA (394 aa).

Helical transmembrane passes span 14–34, 59–79, 95–115, 125–145, 154–174, 179–199, 213–233, 254–274, 292–312, 328–348, and 363–383; these read AGGL…NSAL, LLLW…GLEV, VFPA…YLLF, GWAI…ALLG, VFLL…IALF, VSLQ…YMNW, LVLW…GVIV, GLHP…NAGV, IATG…WLAV, IFAV…IASL, and LGIL…LRLV.

It belongs to the NhaA Na(+)/H(+) (TC 2.A.33) antiporter family.

The protein resides in the cell inner membrane. It carries out the reaction Na(+)(in) + 2 H(+)(out) = Na(+)(out) + 2 H(+)(in). Its function is as follows. Na(+)/H(+) antiporter that extrudes sodium in exchange for external protons. The sequence is that of Na(+)/H(+) antiporter NhaA from Yersinia pseudotuberculosis serotype IB (strain PB1/+).